Reading from the N-terminus, the 732-residue chain is Catalase-peroxidase (732 aa).

The signal sequence occupies residues 1-45 (MDTKVDNAGKCPVVHTHTAHGGRSNRDWWPNQLNLRILHQNSSLS). A cross-link (tryptophyl-tyrosyl-methioninium (Trp-Tyr) (with M-246)) is located at residues 97 to 220 (WHSAGTYRTG…LSAVQMGLIY (124 aa)). His98 (proton acceptor) is an active-site residue. The tryptophyl-tyrosyl-methioninium (Tyr-Met) (with W-97) cross-link spans 220–246 (YVNPEGPNGNPDPLAAARDIRETFARM). His261 provides a ligand contact to heme b.

This sequence belongs to the peroxidase family. Peroxidase/catalase subfamily. As to quaternary structure, homodimer or homotetramer. The cofactor is heme b. Post-translationally, formation of the three residue Trp-Tyr-Met cross-link is important for the catalase, but not the peroxidase activity of the enzyme.

It carries out the reaction H2O2 + AH2 = A + 2 H2O. It catalyses the reaction 2 H2O2 = O2 + 2 H2O. Bifunctional enzyme with both catalase and broad-spectrum peroxidase activity. The protein is Catalase-peroxidase of Rhizobium rhizogenes (strain K84 / ATCC BAA-868) (Agrobacterium radiobacter).